Consider the following 507-residue polypeptide: Fumarate hydratase, mitochondrial (507 aa).

Residues 1-41 (MNRAFCLLARSRRFPRVPSAGAVLSGEAATLPRCAPNVVRM) constitute a mitochondrion transit peptide. Lys-58, Lys-63, and Lys-77 each carry N6-acetyllysine; alternate. N6-succinyllysine; alternate occurs at positions 58, 63, and 77. Thr-82 carries the post-translational modification Phosphothreonine. Lys-91 carries the N6-acetyllysine modification. Residues Lys-112 and Lys-119 each carry the N6-acetyllysine; alternate modification. An N6-succinyllysine; alternate mark is found at Lys-112 and Lys-119. Residues 142-144 (SGT), 173-176 (HPND), and 183-185 (SSN) each bind substrate. Lys-210 carries the post-translational modification N6-acetyllysine. Lys-220 is subject to N6-acetyllysine; alternate. The residue at position 220 (Lys-220) is an N6-succinyllysine; alternate. Thr-231 lines the substrate pocket. Residue His-232 is the Proton donor/acceptor of the active site. Thr-233 bears the Phosphothreonine mark. At Lys-289 the chain carries N6-acetyllysine; alternate. Position 289 is an N6-succinyllysine; alternate (Lys-289). The active site involves Ser-362. Residues Ser-363 and 368–370 (KVN) contribute to the substrate site. Residue Ser-363 is modified to Phosphoserine. Residues Lys-464 and Lys-470 each carry the N6-succinyllysine modification. N6-acetyllysine is present on Lys-499.

It belongs to the class-II fumarase/aspartase family. Fumarase subfamily. Homotetramer. Interacts with H2AZ1. In terms of processing, phosphorylation at Thr-233 by PRKDC in response to DNA damage promotes translocation to the nucleus and recruitment to DNA double-strand breaks (DSBs).

It localises to the mitochondrion. The protein localises to the cytoplasm. Its subcellular location is the cytosol. It is found in the nucleus. The protein resides in the chromosome. The enzyme catalyses (S)-malate = fumarate + H2O. The protein operates within carbohydrate metabolism; tricarboxylic acid cycle; (S)-malate from fumarate: step 1/1. In terms of biological role, catalyzes the reversible stereospecific interconversion of fumarate to L-malate. Experiments in other species have demonstrated that specific isoforms of this protein act in defined pathways and favor one direction over the other. Catalyzes the hydration of fumarate to L-malate in the tricarboxylic acid (TCA) cycle to facilitate a transition step in the production of energy in the form of NADH. Its function is as follows. Catalyzes the dehydration of L-malate to fumarate. Fumarate metabolism in the cytosol plays a role during urea cycle and arginine metabolism; fumarate being a by-product of the urea cycle and amino-acid catabolism. Also plays a role in DNA repair by promoting non-homologous end-joining (NHEJ). In response to DNA damage and phosphorylation by PRKDC, translocates to the nucleus and accumulates at DNA double-strand breaks (DSBs): acts by catalyzing formation of fumarate, an inhibitor of KDM2B histone demethylase activity, resulting in enhanced dimethylation of histone H3 'Lys-36' (H3K36me2). The chain is Fumarate hydratase, mitochondrial from Rattus norvegicus (Rat).